The chain runs to 124 residues: Fluoride-specific ion channel FluC (124 aa).

The next 4 membrane-spanning stretches (helical) occupy residues 4–24, 35–55, 70–90, and 95–115; these read ILFV…ISIF, FGTL…YALG, VGLL…LLLI, and WLKA…MVYL. Glycine 74 and threonine 77 together coordinate Na(+).

This sequence belongs to the fluoride channel Fluc/FEX (TC 1.A.43) family.

It is found in the cell inner membrane. The catalysed reaction is fluoride(in) = fluoride(out). Na(+) is not transported, but it plays an essential structural role and its presence is essential for fluoride channel function. Fluoride-specific ion channel. Important for reducing fluoride concentration in the cell, thus reducing its toxicity. This chain is Fluoride-specific ion channel FluC, found in Shewanella woodyi (strain ATCC 51908 / MS32).